We begin with the raw amino-acid sequence, 89 residues long: Small ribosomal subunit protein uS15 (89 aa).

It belongs to the universal ribosomal protein uS15 family. As to quaternary structure, part of the 30S ribosomal subunit. Forms a bridge to the 50S subunit in the 70S ribosome, contacting the 23S rRNA.

One of the primary rRNA binding proteins, it binds directly to 16S rRNA where it helps nucleate assembly of the platform of the 30S subunit by binding and bridging several RNA helices of the 16S rRNA. Functionally, forms an intersubunit bridge (bridge B4) with the 23S rRNA of the 50S subunit in the ribosome. The chain is Small ribosomal subunit protein uS15 from Roseiflexus castenholzii (strain DSM 13941 / HLO8).